We begin with the raw amino-acid sequence, 885 residues long: Leucine--tRNA ligase (885 aa).

A 'HIGH' region motif is present at residues 48–58 (PYPSGKLHMGH). Positions 639 to 643 (TMSKS) match the 'KMSKS' region motif. Lys642 contributes to the ATP binding site.

The protein belongs to the class-I aminoacyl-tRNA synthetase family.

The protein localises to the cytoplasm. It catalyses the reaction tRNA(Leu) + L-leucine + ATP = L-leucyl-tRNA(Leu) + AMP + diphosphate. This is Leucine--tRNA ligase from Bordetella petrii (strain ATCC BAA-461 / DSM 12804 / CCUG 43448).